The chain runs to 134 residues: D-ribose pyranase (134 aa).

The Proton donor role is filled by H20. Residues D28, H101, and 123 to 125 (YCN) each bind substrate.

It belongs to the RbsD / FucU family. RbsD subfamily. Homodecamer.

Its subcellular location is the cytoplasm. The catalysed reaction is beta-D-ribopyranose = beta-D-ribofuranose. It participates in carbohydrate metabolism; D-ribose degradation; D-ribose 5-phosphate from beta-D-ribopyranose: step 1/2. Its function is as follows. Catalyzes the interconversion of beta-pyran and beta-furan forms of D-ribose. The sequence is that of D-ribose pyranase from Pseudomonas fluorescens (strain SBW25).